Reading from the N-terminus, the 620-residue chain is Threonine--tRNA ligase (620 aa).

Residues 1–42 (MFEIAKGISNSLAKKSVGAKVDGKNVDMSYILDHDAEVEFID) enclose the TGS domain. Residues 224-515 (DHRKLGKELE…LIEHYAGAFP (292 aa)) are catalytic. 3 residues coordinate Zn(2+): Cys315, His366, and His492.

The protein belongs to the class-II aminoacyl-tRNA synthetase family. As to quaternary structure, homodimer. Requires Zn(2+) as cofactor.

It localises to the cytoplasm. The catalysed reaction is tRNA(Thr) + L-threonine + ATP = L-threonyl-tRNA(Thr) + AMP + diphosphate + H(+). Catalyzes the attachment of threonine to tRNA(Thr) in a two-step reaction: L-threonine is first activated by ATP to form Thr-AMP and then transferred to the acceptor end of tRNA(Thr). Also edits incorrectly charged L-seryl-tRNA(Thr). This chain is Threonine--tRNA ligase, found in Fusobacterium nucleatum subsp. nucleatum (strain ATCC 25586 / DSM 15643 / BCRC 10681 / CIP 101130 / JCM 8532 / KCTC 2640 / LMG 13131 / VPI 4355).